Here is a 271-residue protein sequence, read N- to C-terminus: MWRTLLAALLATAGAQYERYSFRSFPRDELMPLESAYRYGLDQYSTENWPESVSYLEVSMRLYRLLRDTEAFCHHNCSSAGPLTAPPPADGELAELRLLAGVLRRAQCLRRCKQGLPAFRQAQPGRELLEEFQRREPYKYLQFAYFKANNLPKAIAAAHTFLLKHPDDEMMQRNMAYYKSIPDAEEHIKDLETKPYENLFVRAVRAYNGDNWRTSISDMELALPDFFKTYDDCIAACEGSREIKDFKDFYLSIADHYIEVLACKVQFDITT.

A signal peptide spans M1 to A15. Residue N76 is glycosylated (N-linked (GlcNAc...) asparagine).

This sequence belongs to the leprecan family. As to expression, found in articular chondrocytes. Expressed in a variety of tissues.

Its subcellular location is the secreted. It is found in the extracellular space. The protein localises to the extracellular matrix. Functionally, necessary for efficient 3-hydroxylation of fibrillar collagen prolyl residues. This chain is Cartilage-associated protein (CRTAP), found in Gallus gallus (Chicken).